The primary structure comprises 450 residues: Phosphoglucosamine mutase (450 aa).

Residue Ser101 is the Phosphoserine intermediate of the active site. Positions 101, 240, 242, and 244 each coordinate Mg(2+). Ser101 bears the Phosphoserine mark.

It belongs to the phosphohexose mutase family. It depends on Mg(2+) as a cofactor. Activated by phosphorylation.

It carries out the reaction alpha-D-glucosamine 1-phosphate = D-glucosamine 6-phosphate. Catalyzes the conversion of glucosamine-6-phosphate to glucosamine-1-phosphate. This Streptococcus gordonii (strain Challis / ATCC 35105 / BCRC 15272 / CH1 / DL1 / V288) protein is Phosphoglucosamine mutase.